Here is a 266-residue protein sequence, read N- to C-terminus: uncharacterized protein (266 aa).

This is an uncharacterized protein from Ostreid herpesvirus 1 (isolate France) (OsHV-1).